Reading from the N-terminus, the 668-residue chain is mRNA cap guanine-N(7) methyltransferase (668 aa).

Over residues 1–19 the composition is skewed to basic and acidic residues; it reads MYDPARDSWEERDGDEARS. Positions 1–281 are disordered; sequence MYDPARDSWE…RAQVEEAMRA (281 aa). A compositionally biased stretch (polar residues) spans 44–65; it reads GENNNTTDLQQHPDPSSKTTAS. Low complexity predominate over residues 73–88; sequence SQPAQPTTQTPPSVST. Over residues 100 to 129 the composition is skewed to polar residues; that stretch reads KASNPQSLTSTAQNQLNKSNTTMENTSGSA. The segment covering 133–142 has biased composition (basic and acidic residues); that stretch reads PRADPSDKPN. A compositionally biased stretch (polar residues) spans 148-157; the sequence is ASPTDQNGSQ. Over residues 257–279 the composition is skewed to basic and acidic residues; it reads LVDRETLRRRQEERERAQVEEAM. The region spanning 310-668 is the mRNA cap 0 methyltransferase domain; that stretch reads SKIKGLRSFN…FYHAFCFYKV (359 aa). 319–320 is an mRNA binding site; that stretch reads NN. Residues K323, G366, D390, D428, 471-473, and Y476 each bind S-adenosyl-L-methionine; that span reads MFT. The tract at residues 524–547 is disordered; the sequence is ARQAQAKKEKSDEAPEDGEVEEDD. Positions 537 to 547 are enriched in acidic residues; that stretch reads APEDGEVEEDD.

The protein belongs to the class I-like SAM-binding methyltransferase superfamily. mRNA cap 0 methyltransferase family.

The protein resides in the nucleus. It carries out the reaction a 5'-end (5'-triphosphoguanosine)-ribonucleoside in mRNA + S-adenosyl-L-methionine = a 5'-end (N(7)-methyl 5'-triphosphoguanosine)-ribonucleoside in mRNA + S-adenosyl-L-homocysteine. In terms of biological role, responsible for methylating the 5'-cap structure of mRNAs. In Aspergillus fumigatus (strain ATCC MYA-4609 / CBS 101355 / FGSC A1100 / Af293) (Neosartorya fumigata), this protein is mRNA cap guanine-N(7) methyltransferase (abd1).